A 100-amino-acid polypeptide reads, in one-letter code: Large ribosomal subunit protein uL23 (100 aa).

Belongs to the universal ribosomal protein uL23 family. As to quaternary structure, part of the 50S ribosomal subunit. Contacts protein L29, and trigger factor when it is bound to the ribosome.

Functionally, one of the early assembly proteins it binds 23S rRNA. One of the proteins that surrounds the polypeptide exit tunnel on the outside of the ribosome. Forms the main docking site for trigger factor binding to the ribosome. The protein is Large ribosomal subunit protein uL23 of Thermotoga neapolitana (strain ATCC 49049 / DSM 4359 / NBRC 107923 / NS-E).